The chain runs to 200 residues: Potassium-transporting ATPase KdpC subunit (200 aa).

A helical membrane pass occupies residues 6-26; the sequence is PAVVLLILLTLITGIAYPLLT.

Belongs to the KdpC family. In terms of assembly, the system is composed of three essential subunits: KdpA, KdpB and KdpC.

Its subcellular location is the cell inner membrane. Part of the high-affinity ATP-driven potassium transport (or Kdp) system, which catalyzes the hydrolysis of ATP coupled with the electrogenic transport of potassium into the cytoplasm. This subunit acts as a catalytic chaperone that increases the ATP-binding affinity of the ATP-hydrolyzing subunit KdpB by the formation of a transient KdpB/KdpC/ATP ternary complex. The chain is Potassium-transporting ATPase KdpC subunit from Yersinia enterocolitica serotype O:8 / biotype 1B (strain NCTC 13174 / 8081).